The chain runs to 202 residues: Small ribosomal subunit protein uS4 (202 aa).

The segment at 22-43 (TRKSARRAYPPGQHGQNRKKRS) is disordered. Residues 90–152 (MRLDNTVFRL…APSRKLVENN (63 aa)) enclose the S4 RNA-binding domain.

It belongs to the universal ribosomal protein uS4 family. As to quaternary structure, part of the 30S ribosomal subunit. Contacts protein S5. The interaction surface between S4 and S5 is involved in control of translational fidelity.

Functionally, one of the primary rRNA binding proteins, it binds directly to 16S rRNA where it nucleates assembly of the body of the 30S subunit. Its function is as follows. With S5 and S12 plays an important role in translational accuracy. The chain is Small ribosomal subunit protein uS4 from Trichormus variabilis (strain ATCC 29413 / PCC 7937) (Anabaena variabilis).